We begin with the raw amino-acid sequence, 188 residues long: UPF0397 protein LACR_0367 (188 aa).

Transmembrane regions (helical) follow at residues 14–34, 48–68, 80–100, 120–140, and 152–172; these read IVVA…LINI, AVLA…IGFI, APWW…GFGV, IVQF…GDIL, and QGVV…TLLL.

This sequence belongs to the UPF0397 family.

The protein resides in the cell membrane. The polypeptide is UPF0397 protein LACR_0367 (Lactococcus lactis subsp. cremoris (strain SK11)).